Reading from the N-terminus, the 296-residue chain is Endochitinase 3 (296 aa).

A GH18 domain is found at 12-296 (HKLTVYWGAE…VKNGQLPEED (285 aa)). Residues Asn32 and Asn152 are each glycosylated (N-linked (GlcNAc...) asparagine). The active-site Proton donor is Glu153. An N-linked (GlcNAc...) asparagine glycan is attached at Asn228.

The protein belongs to the glycosyl hydrolase 18 family. Chitinase class III subfamily.

It is found in the secreted. It carries out the reaction Random endo-hydrolysis of N-acetyl-beta-D-glucosaminide (1-&gt;4)-beta-linkages in chitin and chitodextrins.. Secreted chitinase involved in the degradation of chitin, a component of the cell walls of fungi and exoskeletal elements of some animals (including worms and arthropods). Participates in the infection process and directly acts in the penetration process of the host cuticle. Involved in heat-shock adaptation. In Metarhizium anisopliae (Entomophthora anisopliae), this protein is Endochitinase 3 (chi3).